Consider the following 1193-residue polypeptide: Falcilysin (1193 aa).

Residue histidine 129 coordinates Zn(2+). Catalysis depends on glutamate 132, which acts as the Proton acceptor. Histidine 133 and glutamate 243 together coordinate Zn(2+). Residues 376-404 (DKTNNHNNNHSNNQSSENNGYSNGSHSSD) form a disordered region. The segment covering 380-394 (NHNNNHSNNQSSENN) has biased composition (low complexity). Residues 395-404 (GYSNGSHSSD) are compositionally biased toward polar residues. Residues 583 to 619 (LLEGDENYAQEQENLEKQELKKRIENFNEQEKEQVIK) adopt a coiled-coil conformation.

This sequence belongs to the peptidase M16 family. As to quaternary structure, monomer. Component of the hemozoin formation complex (HFC) composed of falcipains FP2A and/or FP2B, plasmepsins PMII, PMIII/HAP and PMIV, heme detoxifying protein HDP and falcilysin FLN. The HFC complex is involved in hemoglobin degradation and detoxification of heme in the food vacuole during the asexual blood stage. Zn(2+) serves as cofactor. Post-translationally, does not require processing for targeting to the food vacuole or maturation.

Its subcellular location is the vacuole membrane. It localises to the plastid. The protein resides in the apicoplast. The protein localises to the vesicle. In terms of biological role, in the food vacuole, acts downstream of proteases plasmepsins PMI and PMII and falcipains during the catabolism of host hemoglobin by cleaving peptide fragments of alpha and beta hemoglobin subunits generated by PMI and PMII and falcipains. In the apicoplast, degrades apicoplast transit peptides after their cleavage. Prefers bulky hydrophobic amino acids in the P1' position at both acidic and neutral pH. At P2', prefers hydrophobic residues at acidic pH; at neutral pH, these same residues are abundant but prefers Arg. At P3', prefers hydrophobic residues, especially Met, at both pH conditions. At P4' and P5', prefers acidic residues at acidic pH, however, at neutral pH, the enzyme is less selective at these positions. The optimal site cleavage at acidic pH is YNEHS-|-FFMEE and, at neutral pH, MKRHS-|-FRMRG. This chain is Falcilysin, found in Plasmodium falciparum (isolate 3D7).